Consider the following 990-residue polypeptide: Presequence protease, mitochondrial (990 aa).

The transit peptide at 1-56 directs the protein to the mitochondrion; that stretch reads MLRFQRTVPRVAIRRLANVYSEGAVLHGYKVRRAQEIPEMRMAAVELEHEMTGARH. His-84 lines the Zn(2+) pocket. Residue Glu-87 is the Proton acceptor of the active site. Residue His-88 coordinates Zn(2+). Glu-160 is a catalytic residue. Glu-185 lines the Zn(2+) pocket.

The protein belongs to the peptidase M16 family. PreP subfamily. As to quaternary structure, monomer and homodimer; homodimerization is induced by binding of the substrate. The cofactor is Zn(2+).

The protein resides in the mitochondrion intermembrane space. The protein localises to the mitochondrion matrix. Functionally, degrades mitochondrial transit peptides after their cleavage in the intermembrane space or in the matrix, and presequence peptides; clearance of these peptides is required to keep the presequence processing machinery running. Preferentially cleaves the N-terminal side of paired basic amino acid residues. Also degrades other unstructured peptides. May function as an ATP-dependent peptidase as opposed to a metalloendopeptidase. The chain is Presequence protease, mitochondrial (CYM1) from Eremothecium gossypii (strain ATCC 10895 / CBS 109.51 / FGSC 9923 / NRRL Y-1056) (Yeast).